The primary structure comprises 358 residues: Isopentenyl-diphosphate delta-isomerase (358 aa).

12–13 (RK) contacts substrate. Residues 69 to 71 (AMT), serine 99, and asparagine 128 each bind FMN. A substrate-binding site is contributed by glutamine 158. Glutamate 159 is a Mg(2+) binding site. Residues lysine 190, threonine 220, 267 to 269 (GIR), and 288 to 289 (AG) each bind FMN.

It belongs to the IPP isomerase type 2 family. In terms of assembly, homooctamer. Dimer of tetramers. The cofactor is FMN. Requires NADPH as cofactor. Mg(2+) serves as cofactor.

The protein localises to the cytoplasm. It catalyses the reaction isopentenyl diphosphate = dimethylallyl diphosphate. Its function is as follows. Involved in the biosynthesis of isoprenoids. Catalyzes the 1,3-allylic rearrangement of the homoallylic substrate isopentenyl (IPP) to its allylic isomer, dimethylallyl diphosphate (DMAPP). This is Isopentenyl-diphosphate delta-isomerase from Listeria monocytogenes serotype 4b (strain CLIP80459).